The primary structure comprises 122 residues: Ribonuclease P protein component (122 aa).

Belongs to the RnpA family. In terms of assembly, consists of a catalytic RNA component (M1 or rnpB) and a protein subunit.

It carries out the reaction Endonucleolytic cleavage of RNA, removing 5'-extranucleotides from tRNA precursor.. RNaseP catalyzes the removal of the 5'-leader sequence from pre-tRNA to produce the mature 5'-terminus. It can also cleave other RNA substrates such as 4.5S RNA. The protein component plays an auxiliary but essential role in vivo by binding to the 5'-leader sequence and broadening the substrate specificity of the ribozyme. In Synechococcus elongatus (strain ATCC 33912 / PCC 7942 / FACHB-805) (Anacystis nidulans R2), this protein is Ribonuclease P protein component.